The chain runs to 586 residues: MKYILVTGGVISGIGKGIIASSIGTILKSCGLRVTAIKIDPYINIDAGTFSPYEHGEVFVLNDGGEVDLDLGNYERFLDINLYKDNNITTGKIYQHVINKERRGDYLGKTVQVVPHITDAIQDWVMNQAKVSVDGNKEDPQICVIELGGTIGDIEGMAFVEAFRQFQFKAKRENFYNIHVSLVPQPSATGEQKTKPTQNSVRALRGLGLSPDLIVCRSSTPIEMAVKEKISMFCHVNPEQVICIHDVSSIYRVPLLLEEQGVVKYFQERLDLPINDCSNNLLFKWKTMADRYERLQKICSIALVGKYTKLRDCYASVFKALEHSALAINHKLNLMYIDSIDLEPVTKAEDPVKFHEAWQKLCLADGILVPGGFGIRGTLGKLQAISWARTKKIPFLGICLGMQLAVIEFARNCLNLKDANSTEFDPNTPVPLVIDMPEHNPGDLGGTMRLGLRRTVFTTENSILKKLYGDVPYIEERHRHRYEVNPNLINQFENKDLCFVGEDVDGKRMEIIELTGHPYFIGVQFHPEFSSRPMKPSPPYLGLLLAATGTLNTHLQQMSKLSYSDIYSDASDDSFSEAKFAELDIN.

The Glutamine amidotransferase type-1 domain occupies 300-554; that stretch reads SIALVGKYTK…LAATGTLNTH (255 aa). Residues Cys-399, His-526, and Glu-528 each act as for GATase activity in the active site. Ser-568, Ser-571, and Ser-574 each carry phosphoserine.

This sequence belongs to the CTP synthase family.

It catalyses the reaction UTP + L-glutamine + ATP + H2O = CTP + L-glutamate + ADP + phosphate + 2 H(+). It functions in the pathway pyrimidine metabolism; CTP biosynthesis via de novo pathway; CTP from UDP: step 2/2. Its function is as follows. Catalyzes the ATP-dependent amination of UTP to CTP with either L-glutamine or ammonia as the source of nitrogen. Constitutes the rate-limiting enzyme in the synthesis of cytosine nucleotides. This Rattus norvegicus (Rat) protein is CTP synthase 2 (Ctps2).